The following is a 475-amino-acid chain: Trifunctional enzyme subunit beta, mitochondrial (475 aa).

Residues Met1–Arg34 constitute a mitochondrion transit peptide. The residue at position 73 (Lys73) is an N6-acetyllysine; alternate. Position 73 is an N6-succinyllysine; alternate (Lys73). Cys139 functions as the Acyl-thioester intermediate in the catalytic mechanism. The stretch at Ile174–Ser221 is an intramembrane region. Residue Lys189 is modified to N6-acetyllysine; alternate. Lys189 carries the N6-succinyllysine; alternate modification. An N6-succinyllysine mark is found at Lys191, Lys273, and Lys292. The residue at position 294 (Lys294) is an N6-acetyllysine; alternate. The residue at position 294 (Lys294) is an N6-succinyllysine; alternate. Lys299 carries the post-translational modification N6-acetyllysine. Lys333 carries the post-translational modification N6-acetyllysine; alternate. Lys333 is modified (N6-succinyllysine; alternate). Residues Lys349 and Lys362 each carry the N6-acetyllysine modification. Cys459 acts as the Proton donor/acceptor in catalysis.

This sequence belongs to the thiolase-like superfamily. Thiolase family. Heterotetramer of 2 alpha/HADHA and 2 beta/HADHB subunits; forms the mitochondrial trifunctional enzyme. Also purified as higher order heterooligomers including a 4 alpha/HADHA and 4 beta/HADHB heterooligomer which physiological significance remains unclear. The mitochondrial trifunctional enzyme interacts with MTLN. Interacts with RSAD2/viperin.

The protein resides in the mitochondrion. Its subcellular location is the mitochondrion inner membrane. It is found in the mitochondrion outer membrane. It localises to the endoplasmic reticulum. It catalyses the reaction an acyl-CoA + acetyl-CoA = a 3-oxoacyl-CoA + CoA. The catalysed reaction is butanoyl-CoA + acetyl-CoA = 3-oxohexanoyl-CoA + CoA. The enzyme catalyses hexanoyl-CoA + acetyl-CoA = 3-oxooctanoyl-CoA + CoA. It carries out the reaction octanoyl-CoA + acetyl-CoA = 3-oxodecanoyl-CoA + CoA. It catalyses the reaction decanoyl-CoA + acetyl-CoA = 3-oxododecanoyl-CoA + CoA. The catalysed reaction is dodecanoyl-CoA + acetyl-CoA = 3-oxotetradecanoyl-CoA + CoA. The enzyme catalyses tetradecanoyl-CoA + acetyl-CoA = 3-oxohexadecanoyl-CoA + CoA. Its pathway is lipid metabolism; fatty acid beta-oxidation. Mitochondrial trifunctional enzyme catalyzes the last three of the four reactions of the mitochondrial beta-oxidation pathway. The mitochondrial beta-oxidation pathway is the major energy-producing process in tissues and is performed through four consecutive reactions breaking down fatty acids into acetyl-CoA. Among the enzymes involved in this pathway, the trifunctional enzyme exhibits specificity for long-chain fatty acids. Mitochondrial trifunctional enzyme is a heterotetrameric complex composed of two proteins, the trifunctional enzyme subunit alpha/HADHA carries the 2,3-enoyl-CoA hydratase and the 3-hydroxyacyl-CoA dehydrogenase activities, while the trifunctional enzyme subunit beta/HADHB described here bears the 3-ketoacyl-CoA thiolase activity. The polypeptide is Trifunctional enzyme subunit beta, mitochondrial (HADHB) (Pan troglodytes (Chimpanzee)).